Consider the following 244-residue polypeptide: Methylthioribulose-1-phosphate dehydratase (244 aa).

Residue cysteine 89 participates in substrate binding. Positions 107 and 109 each coordinate Zn(2+). Glutamate 130 functions as the Proton donor/acceptor in the catalytic mechanism. Position 192 (histidine 192) interacts with Zn(2+).

It belongs to the aldolase class II family. MtnB subfamily. Zn(2+) is required as a cofactor.

It is found in the cytoplasm. It carries out the reaction 5-(methylsulfanyl)-D-ribulose 1-phosphate = 5-methylsulfanyl-2,3-dioxopentyl phosphate + H2O. Its pathway is amino-acid biosynthesis; L-methionine biosynthesis via salvage pathway; L-methionine from S-methyl-5-thio-alpha-D-ribose 1-phosphate: step 2/6. Functionally, catalyzes the dehydration of methylthioribulose-1-phosphate (MTRu-1-P) into 2,3-diketo-5-methylthiopentyl-1-phosphate (DK-MTP-1-P). The polypeptide is Methylthioribulose-1-phosphate dehydratase (Saccharomyces cerevisiae (strain AWRI1631) (Baker's yeast)).